The primary structure comprises 543 residues: CTP synthase (543 aa).

Positions M1–L265 are amidoligase domain. S13 is a binding site for CTP. S13 is a binding site for UTP. ATP-binding positions include S14–I19 and D71. Mg(2+) contacts are provided by D71 and E139. CTP is bound by residues D146–E148, K186–Q191, and K222. Residues K186–Q191 and K222 each bind UTP. One can recognise a Glutamine amidotransferase type-1 domain in the interval T290–R541. Position 351 (G351) interacts with L-glutamine. Catalysis depends on C378, which acts as the Nucleophile; for glutamine hydrolysis. Residues L379 to Q382, E402, and R469 each bind L-glutamine. Active-site residues include H514 and E516.

This sequence belongs to the CTP synthase family. Homotetramer.

It carries out the reaction UTP + L-glutamine + ATP + H2O = CTP + L-glutamate + ADP + phosphate + 2 H(+). The catalysed reaction is L-glutamine + H2O = L-glutamate + NH4(+). It catalyses the reaction UTP + NH4(+) + ATP = CTP + ADP + phosphate + 2 H(+). It participates in pyrimidine metabolism; CTP biosynthesis via de novo pathway; CTP from UDP: step 2/2. Its activity is regulated as follows. Allosterically activated by GTP, when glutamine is the substrate; GTP has no effect on the reaction when ammonia is the substrate. The allosteric effector GTP functions by stabilizing the protein conformation that binds the tetrahedral intermediate(s) formed during glutamine hydrolysis. Inhibited by the product CTP, via allosteric rather than competitive inhibition. In terms of biological role, catalyzes the ATP-dependent amination of UTP to CTP with either L-glutamine or ammonia as the source of nitrogen. Regulates intracellular CTP levels through interactions with the four ribonucleotide triphosphates. The polypeptide is CTP synthase (Saccharophagus degradans (strain 2-40 / ATCC 43961 / DSM 17024)).